Here is a 329-residue protein sequence, read N- to C-terminus: NADH-quinone oxidoreductase subunit H (329 aa).

8 consecutive transmembrane segments (helical) span residues 11–31 (IVVA…CGAL), 81–101 (LIFT…FAVV), 114–134 (IGLL…LFAG), 154–174 (ISYE…TGSF), 187–207 (TWFI…GVAV), 238–258 (FFVG…TLFF), 270–290 (QLSF…FILL), and 309–329 (FCLP…LAAQ).

This sequence belongs to the complex I subunit 1 family. NDH-1 is composed of 13 different subunits. Subunits NuoA, H, J, K, L, M, N constitute the membrane sector of the complex.

The protein localises to the cell inner membrane. It carries out the reaction a quinone + NADH + 5 H(+)(in) = a quinol + NAD(+) + 4 H(+)(out). NDH-1 shuttles electrons from NADH, via FMN and iron-sulfur (Fe-S) centers, to quinones in the respiratory chain. The immediate electron acceptor for the enzyme in this species is believed to be ubiquinone. Couples the redox reaction to proton translocation (for every two electrons transferred, four hydrogen ions are translocated across the cytoplasmic membrane), and thus conserves the redox energy in a proton gradient. This subunit may bind ubiquinone. In Azotobacter vinelandii (strain DJ / ATCC BAA-1303), this protein is NADH-quinone oxidoreductase subunit H.